A 429-amino-acid polypeptide reads, in one-letter code: Adenylosuccinate synthetase (429 aa).

GTP contacts are provided by residues 12–18 (GDEGKGK) and 40–42 (GHT). The Proton acceptor role is filled by aspartate 13. Mg(2+) is bound by residues aspartate 13 and glycine 40. IMP-binding positions include 13–16 (DEGK), 38–41 (NAGH), threonine 128, arginine 142, glutamine 223, threonine 238, and arginine 302. Catalysis depends on histidine 41, which acts as the Proton donor. 298 to 304 (TVTGRPR) contributes to the substrate binding site. GTP-binding positions include arginine 304, 330–332 (LLD), and 412–414 (SVG).

The protein belongs to the adenylosuccinate synthetase family. Homodimer. Mg(2+) is required as a cofactor.

It localises to the cytoplasm. It catalyses the reaction IMP + L-aspartate + GTP = N(6)-(1,2-dicarboxyethyl)-AMP + GDP + phosphate + 2 H(+). It participates in purine metabolism; AMP biosynthesis via de novo pathway; AMP from IMP: step 1/2. Functionally, plays an important role in the de novo pathway of purine nucleotide biosynthesis. Catalyzes the first committed step in the biosynthesis of AMP from IMP. The protein is Adenylosuccinate synthetase of Limosilactobacillus fermentum (strain NBRC 3956 / LMG 18251) (Lactobacillus fermentum).